A 620-amino-acid polypeptide reads, in one-letter code: 1-deoxy-D-xylulose-5-phosphate synthase (620 aa).

Residues His-80 and 121-123 (GHS) each bind thiamine diphosphate. Asp-152 provides a ligand contact to Mg(2+). Thiamine diphosphate is bound by residues 153-154 (GA), Asn-181, Tyr-288, and Glu-370. A Mg(2+)-binding site is contributed by Asn-181.

The protein belongs to the transketolase family. DXPS subfamily. In terms of assembly, homodimer. Mg(2+) serves as cofactor. It depends on thiamine diphosphate as a cofactor.

The enzyme catalyses D-glyceraldehyde 3-phosphate + pyruvate + H(+) = 1-deoxy-D-xylulose 5-phosphate + CO2. It participates in metabolic intermediate biosynthesis; 1-deoxy-D-xylulose 5-phosphate biosynthesis; 1-deoxy-D-xylulose 5-phosphate from D-glyceraldehyde 3-phosphate and pyruvate: step 1/1. Functionally, catalyzes the acyloin condensation reaction between C atoms 2 and 3 of pyruvate and glyceraldehyde 3-phosphate to yield 1-deoxy-D-xylulose-5-phosphate (DXP). The polypeptide is 1-deoxy-D-xylulose-5-phosphate synthase (Escherichia coli (strain K12 / MC4100 / BW2952)).